The following is a 415-amino-acid chain: Polyadenylate-binding protein RBP45C (415 aa).

A disordered region spans residues 1–77; sequence MMQQPPPASN…GGSQNPGSAG (77 aa). Low complexity predominate over residues 23–64; that stretch reads QQAYLQQQQSWMMQHQQQQQGQPPAGWNQQSAPSSGQPQQQQ. RRM domains follow at residues 80 to 160, 173 to 252, and 278 to 350; these read RSLW…WAQL, HTVF…PAAN, and TTIF…WGRS. Residues 344 to 356 show a composition bias toward polar residues; the sequence is RLSWGRSPSNKQT. The segment at 344–369 is disordered; that stretch reads RLSWGRSPSNKQTQPDQAQYGGGGGY.

Belongs to the polyadenylate-binding RBP45 family. Interacts with the poly(A) tail of mRNA in nucleus. As to expression, mostly expressed in seedlings and stems, and, to a lower extent, in leaves and flowers.

The protein resides in the nucleus. Heterogeneous nuclear ribonucleoprotein (hnRNP)-protein binding the poly(A) tail of mRNA and probably involved in some steps of pre-mRNA maturation. The protein is Polyadenylate-binding protein RBP45C (RBP45C) of Arabidopsis thaliana (Mouse-ear cress).